The following is a 128-amino-acid chain: ATP synthase epsilon chain (128 aa).

Belongs to the ATPase epsilon chain family. F-type ATPases have 2 components, CF(1) - the catalytic core - and CF(0) - the membrane proton channel. CF(1) has five subunits: alpha(3), beta(3), gamma(1), delta(1), epsilon(1). CF(0) has three main subunits: a, b and c.

The protein resides in the cell inner membrane. Functionally, produces ATP from ADP in the presence of a proton gradient across the membrane. The polypeptide is ATP synthase epsilon chain (Sulfurovum sp. (strain NBC37-1)).